The following is a 322-amino-acid chain: Arginase-1 (322 aa).

The segment at 1 to 27 (MSSKPQSIGVIGAPFSKGQPRGGVEEG) is disordered. Phosphoserine is present on S7. Residue K17 is modified to N6-succinyllysine. S62 carries the phosphoserine modification. K75 is subject to N6-succinyllysine. Residues H101, D124, H126, and D128 each contribute to the Mn(2+) site. Substrate-binding positions include 126 to 130 (HTDIN), 137 to 139 (TGN), and D183. Residue S217 is modified to Phosphoserine. The Mn(2+) site is built by D232 and D234. The substrate site is built by T246 and E277.

Belongs to the arginase family. Homotrimer. Interacts with CMTM6. Mn(2+) serves as cofactor.

It localises to the cytoplasm. It catalyses the reaction L-arginine + H2O = urea + L-ornithine. It participates in nitrogen metabolism; urea cycle; L-ornithine and urea from L-arginine: step 1/1. The polypeptide is Arginase-1 (ARG1) (Bos taurus (Bovine)).